Reading from the N-terminus, the 238-residue chain is Demethylmenaquinone methyltransferase (238 aa).

Residues Thr-65, Asp-85, and 109-110 each bind S-adenosyl-L-methionine; that span reads DA.

The protein belongs to the class I-like SAM-binding methyltransferase superfamily. MenG/UbiE family.

The catalysed reaction is a 2-demethylmenaquinol + S-adenosyl-L-methionine = a menaquinol + S-adenosyl-L-homocysteine + H(+). Its pathway is quinol/quinone metabolism; menaquinone biosynthesis; menaquinol from 1,4-dihydroxy-2-naphthoate: step 2/2. Methyltransferase required for the conversion of demethylmenaquinol (DMKH2) to menaquinol (MKH2). The polypeptide is Demethylmenaquinone methyltransferase (Roseiflexus sp. (strain RS-1)).